A 335-amino-acid polypeptide reads, in one-letter code: Methionyl-tRNA formyltransferase (335 aa).

(6S)-5,6,7,8-tetrahydrofolate is bound at residue 122–125 (SLLP). The interval 203–222 (DSHGPLGEPQDPAKVSKAPR) is disordered.

Belongs to the Fmt family.

It carries out the reaction L-methionyl-tRNA(fMet) + (6R)-10-formyltetrahydrofolate = N-formyl-L-methionyl-tRNA(fMet) + (6S)-5,6,7,8-tetrahydrofolate + H(+). Its function is as follows. Attaches a formyl group to the free amino group of methionyl-tRNA(fMet). The formyl group appears to play a dual role in the initiator identity of N-formylmethionyl-tRNA by promoting its recognition by IF2 and preventing the misappropriation of this tRNA by the elongation apparatus. The protein is Methionyl-tRNA formyltransferase of Rhodopirellula baltica (strain DSM 10527 / NCIMB 13988 / SH1).